We begin with the raw amino-acid sequence, 708 residues long: Vertnin (708 aa).

Disordered regions lie at residues P473–P499 and A561–E636. Residues G568–R582 are compositionally biased toward basic and acidic residues.

It belongs to the vertnin family.

The polypeptide is Vertnin (VRTN) (Ailuropoda melanoleuca (Giant panda)).